The chain runs to 368 residues: 4-hydroxy-3-methylbut-2-en-1-yl diphosphate synthase (flavodoxin) (368 aa).

The [4Fe-4S] cluster site is built by Cys-268, Cys-271, Cys-303, and Glu-310.

This sequence belongs to the IspG family. [4Fe-4S] cluster serves as cofactor.

It carries out the reaction (2E)-4-hydroxy-3-methylbut-2-enyl diphosphate + oxidized [flavodoxin] + H2O + 2 H(+) = 2-C-methyl-D-erythritol 2,4-cyclic diphosphate + reduced [flavodoxin]. The protein operates within isoprenoid biosynthesis; isopentenyl diphosphate biosynthesis via DXP pathway; isopentenyl diphosphate from 1-deoxy-D-xylulose 5-phosphate: step 5/6. Its function is as follows. Converts 2C-methyl-D-erythritol 2,4-cyclodiphosphate (ME-2,4cPP) into 1-hydroxy-2-methyl-2-(E)-butenyl 4-diphosphate. This is 4-hydroxy-3-methylbut-2-en-1-yl diphosphate synthase (flavodoxin) from Listeria monocytogenes serovar 1/2a (strain ATCC BAA-679 / EGD-e).